The primary structure comprises 135 residues: Sex-regulated protein janus-A (135 aa).

Substrate is bound at residue Lys37. His63 acts as the Proton acceptor in catalysis. 104-106 contributes to the substrate binding site; sequence SQG.

Belongs to the janus family.

Functionally, janA and janB regulate somatic sex differentiation. In Drosophila erecta (Fruit fly), this protein is Sex-regulated protein janus-A (janA).